A 349-amino-acid chain; its full sequence is Draxin (349 aa).

Positions 1–25 are cleaved as a signal peptide; sequence MAGPAIHTAPMLFLVLLLPLELSLA. 3 disordered regions span residues 38–79, 118–145, and 244–273; these read PENH…QDGA, PYPEKENRPPGWERTRKRSREHKRRRDR, and DGWPSAKKKEKHRGKLSSDGNETSPAEGEP. A compositionally biased stretch (basic and acidic residues) spans 120 to 131; it reads PEKENRPPGWER. Composition is skewed to basic residues over residues 132-145 and 249-258; these read TRKRSREHKRRRDR and AKKKEKHRGK. Asparagine 264 is a glycosylation site (N-linked (GlcNAc...) asparagine).

It belongs to the draxin family. As to quaternary structure, interacts with LRP6.

The protein resides in the secreted. In terms of biological role, chemorepulsive axon guidance protein required for the development of spinal cord and forebrain commissures. Acts as a chemorepulsive guidance protein for commissural axons during development. Able to inhibit or repel neurite outgrowth from dorsal spinal cord. Inhibits the stabilization of cytosolic beta-catenin (CTNNB1) via its interaction with LRP6, thereby acting as an antagonist of Wnt signaling pathway. In Homo sapiens (Human), this protein is Draxin.